The sequence spans 400 residues: Homoserine O-acetyltransferase (400 aa).

The span at Met1–Ala11 shows a compositional bias: polar residues. Positions Met1–Pro24 are disordered. Basic and acidic residues predominate over residues His13–His23. Residues Asn64–Leu373 enclose the AB hydrolase-1 domain. The Nucleophile role is filled by Ser169. Residue Arg239 participates in substrate binding. Active-site residues include Asp335 and His368. Asp369 is a binding site for substrate.

This sequence belongs to the AB hydrolase superfamily. MetX family. As to quaternary structure, homodimer.

It is found in the cytoplasm. It catalyses the reaction L-homoserine + acetyl-CoA = O-acetyl-L-homoserine + CoA. The protein operates within amino-acid biosynthesis; L-methionine biosynthesis via de novo pathway; O-acetyl-L-homoserine from L-homoserine: step 1/1. In terms of biological role, transfers an acetyl group from acetyl-CoA to L-homoserine, forming acetyl-L-homoserine. This Rhodopseudomonas palustris (strain BisB18) protein is Homoserine O-acetyltransferase.